We begin with the raw amino-acid sequence, 668 residues long: MSEAIFLTFPDGSVRSFPAGATGRDVAESISKSLAKSAVAIAIDGTVQDLSDTVADGKIEIITRKDGRALELIRHDAAHVMAEAVQELWPGTQVTIGPVIENGFYYDFAKNEPFTPDDLPKIEKKMKEIIARNAPFTKQIWSREKAKEVFAAKGENYKVELVDAIPAGQDLKIYNQGDWFDLCRGPHMASTGQVGTAFKLMKVAGAYWRGDSNNAMLSRIYGTAWADQADLDNYLHMLAEAEKRDHRKLGREMDLFHFQEEGPGVVFWHGKGWRIFQALVSYMRRRLAVDYEEVNAPQVLDTALWETSGHWGWYQENMFAVKSAHAMTHPEDKEADNRVFALKPMNCPGHVQIFKHGLKSYRELPIRLAEFGLVHRYEPSGALHGLMRVRGFTQDDAHIFCTDEQMAAECLKINDLILSVYEDFGFKEIVVKLSTRPEKRVGSDALWDRAEAVMTDVLKTIEAQSEGRIKTGILPGEGAFYGPKFEYTLKDAIGREWQCGTTQVDFNLPERFGAFYIDSNSEKTQPVMIHRAICGSMERFLGILIENFAGHLPLWVSPLQVVVATITSEADAYGLEVAEALREAGLNVETDFRNEKINYKVREHSVTKVPVIIVCGRKEAEERTVNIRRLGSQDQVSMGLDAAVDSLALEATPPDVRRKAEAKKARAA.

A TGS domain is found at 1–64 (MSEAIFLTFP…ADGKIEIITR (64 aa)). Residues 245 to 553 (DHRKLGREMD…LIENFAGHLP (309 aa)) form a catalytic region. Zn(2+) contacts are provided by Cys-347, His-398, and His-530.

It belongs to the class-II aminoacyl-tRNA synthetase family. As to quaternary structure, homodimer. It depends on Zn(2+) as a cofactor.

The protein resides in the cytoplasm. The enzyme catalyses tRNA(Thr) + L-threonine + ATP = L-threonyl-tRNA(Thr) + AMP + diphosphate + H(+). Its function is as follows. Catalyzes the attachment of threonine to tRNA(Thr) in a two-step reaction: L-threonine is first activated by ATP to form Thr-AMP and then transferred to the acceptor end of tRNA(Thr). Also edits incorrectly charged L-seryl-tRNA(Thr). In Rhizobium leguminosarum bv. trifolii (strain WSM2304), this protein is Threonine--tRNA ligase.